The primary structure comprises 543 residues: MLKKNDIVEVEIVDLTHEGAGVAKVDGLVFFVENALPSEKILMRVLKVNKKIGFGKVEKYLVQSPHRNQDLDLAYLRSGIADLGHLSYPEQLKFKTKQVKDSLYKIAGIADVEVAETLGMEHPVKYRNKAQVPVRRVNGVLETGFFRKNSHNLMPLEDFFIQDPVIDQVVVALRDLLRRFDLKPYDEKEQSGLIRNLVVRRGHYSGQIMVVLVTTRPKVFRVDQLIEQVIKQFPEIVSVMQNINDQNTNAIFGKEWRTLYGQDYITDQMLGNDFQIAGLAFYQVNTEMAEKLYQTAIDFAELKKDDVVIDAYSGIGTIGLSVAKHVKEVYGVELIPEAVENSKKNAQLNNISNAHYVCDTAENAMKNWLKDGIQPTVILVDPPRKGLTESFIKASAQTGADRIAYISCNVATMARDIKLYQELGYELKKVQPVDLFPQTHHVETVALLSKLDVDKHISVEIELDEMDLTSAESKATYAQIKEYVWNKFELKVSTLYIAQIKKKCGIELREHYNKSKKDKQIIPQCTPEKEEAIMDALRHFKMI.

One can recognise a TRAM domain in the interval 1–59 (MLKKNDIVEVEIVDLTHEGAGVAKVDGLVFFVENALPSEKILMRVLKVNKKIGFGKVEK). S-adenosyl-L-methionine-binding residues include glutamine 283, tyrosine 312, glutamate 333, and aspartate 381. Cysteine 408 functions as the Nucleophile in the catalytic mechanism.

The protein belongs to the class I-like SAM-binding methyltransferase superfamily. RNA M5U methyltransferase family.

This is an uncharacterized protein from Streptococcus pneumoniae (strain ATCC BAA-255 / R6).